A 1237-amino-acid polypeptide reads, in one-letter code: Cilia- and flagella-associated protein 61 (1237 aa).

A disordered region spans residues 278–301 (QDLSVRRSQDAELRSSSQGSQKIV). Over residues 281 to 290 (SVRRSQDAEL) the composition is skewed to basic and acidic residues.

Component of axonemal radial spokes, the protein complexes that link the outer microtubule doublets with the central pair of microtubules. Interacts with CFAP91/MAATS1, ODAD2/ARMC4, RSPH3A, ROPN1, ROPN1L and RSPH9. Interacts with DYNLT1, DYNC1I2 and TUBB3. Interacts with WDR35, IFT22 and IFT81.

The protein resides in the cytoplasm. The protein localises to the cytoskeleton. Its subcellular location is the flagellum axoneme. Its function is as follows. Involved in sperm flagellum assembly. Plays an essential role in the formation of the radial spokes in flagellum axoneme. This chain is Cilia- and flagella-associated protein 61, found in Homo sapiens (Human).